The sequence spans 133 residues: Mediator of RNA polymerase II transcription subunit 10 (133 aa).

It belongs to the Mediator complex subunit 10 family. In terms of assembly, component of the Mediator complex. Interacts with MED4 and MED21.

It is found in the nucleus. Functionally, component of the Mediator complex, a coactivator involved in the regulated transcription of nearly all RNA polymerase II-dependent genes. Mediator functions as a bridge to convey information from gene-specific regulatory proteins to the basal RNA polymerase II transcription machinery. Mediator is recruited to promoters by direct interactions with regulatory proteins and serves as a scaffold for the assembly of a functional preinitiation complex with RNA polymerase II and the general transcription factors. Required for activated transcription of the MtnA, MtnB and MtnD genes. The polypeptide is Mediator of RNA polymerase II transcription subunit 10 (MED10) (Drosophila melanogaster (Fruit fly)).